Reading from the N-terminus, the 616-residue chain is Membrane protein insertase YidC (616 aa).

The helical transmembrane segment at 8-28 threads the bilayer; that stretch reads MFVAIALSLVVLLGWHYFVTG. The interval 33–85 is disordered; sequence RQRQAAQSQTAQTGAPQTADGIPSPSPREGGPNAPAPGTLPGAAAQGPVSRED. 2 stretches are compositionally biased toward low complexity: residues 36-51 and 62-80; these read QAAQ…PQTA and GGPN…AQGP. The next 4 helical transmembrane spans lie at 386 to 406, 460 to 480, 516 to 536, and 551 to 571; these read LLGN…LFFL, WPVL…FITI, YIPI…FIQM, and FAFM…GLVI.

It belongs to the OXA1/ALB3/YidC family. Type 1 subfamily. Interacts with the Sec translocase complex via SecD. Specifically interacts with transmembrane segments of nascent integral membrane proteins during membrane integration.

The protein resides in the cell inner membrane. Its function is as follows. Required for the insertion and/or proper folding and/or complex formation of integral membrane proteins into the membrane. Involved in integration of membrane proteins that insert both dependently and independently of the Sec translocase complex, as well as at least some lipoproteins. Aids folding of multispanning membrane proteins. The polypeptide is Membrane protein insertase YidC (Methylorubrum extorquens (strain PA1) (Methylobacterium extorquens)).